Here is a 62-residue protein sequence, read N- to C-terminus: Bowman-Birk type proteinase inhibitor B7 (62 aa).

Intrachain disulfides connect Cys-5–Cys-59, Cys-6–Cys-23, Cys-13–Cys-21, Cys-30–Cys-37, and Cys-34–Cys-51.

This sequence belongs to the Bowman-Birk serine protease inhibitor family. As to expression, expressed in bulb (at protein level).

Its function is as follows. Serine protease inhibitor. Inhibits trypsin (Ki = 65 nM) and weakly inhibits chymotrypsin (Ki = 295 nM). Does not inhibit bacterial subtilisin. The chain is Bowman-Birk type proteinase inhibitor B7 from Hyacinthus orientalis (Common hyacinth).